The primary structure comprises 312 residues: Olfactory receptor 8K3 (312 aa).

At 1 to 25 the chain is on the extracellular side; it reads MEQHNLTTVNEFILTGITDIAELQA. The N-linked (GlcNAc...) asparagine glycan is linked to N5. The chain crosses the membrane as a helical span at residues 26 to 46; that stretch reads PLFALFLMIYVISVMGNLGMI. Residues 47–54 lie on the Cytoplasmic side of the membrane; the sequence is VLTKLDSR. The chain crosses the membrane as a helical span at residues 55 to 75; that stretch reads LQTPMYFFLRHLAFMDLGYST. Residues 76–99 are Extracellular-facing; the sequence is TVGPKMLVNFVVDKNIISYYFCAT. An intrachain disulfide couples C97 to C189. The helical transmembrane segment at 100 to 120 threads the bilayer; that stretch reads QLAFFLVFIGSELFILSAMSY. Residues 121–139 are Cytoplasmic-facing; it reads DLYVAICNPLLYTVIMSRR. Residues 140 to 160 traverse the membrane as a helical segment; sequence VCQVLVAIPYLYCTFISLLVT. Residues 161-197 lie on the Extracellular side of the membrane; that stretch reads IKIFTLSFCGYNVISHFYCDSLPLLPLLCSNTHEIEL. A helical transmembrane segment spans residues 198–217; it reads IILIFAAIDLISSLLIVLLS. Topologically, residues 218 to 236 are cytoplasmic; that stretch reads YLLILVAILRMNSAGRQKA. Residues 237–257 form a helical membrane-spanning segment; the sequence is FSTCGAHLTVVIVFYGTLLFM. Topologically, residues 258 to 270 are extracellular; the sequence is YVQPKSSHSFDTD. The chain crosses the membrane as a helical span at residues 271 to 291; it reads KVASIFYTLVIPMLNPLIYSL. The Cytoplasmic segment spans residues 292–312; it reads RNKDVKYALRRTWNNLCNIFV.

This sequence belongs to the G-protein coupled receptor 1 family.

It localises to the cell membrane. In terms of biological role, odorant receptor. The polypeptide is Olfactory receptor 8K3 (OR8K3) (Homo sapiens (Human)).